The chain runs to 106 residues: ATP-dependent Clp protease adapter protein ClpS (106 aa).

It belongs to the ClpS family. As to quaternary structure, binds to the N-terminal domain of the chaperone ClpA.

In terms of biological role, involved in the modulation of the specificity of the ClpAP-mediated ATP-dependent protein degradation. The protein is ATP-dependent Clp protease adapter protein ClpS of Salmonella gallinarum (strain 287/91 / NCTC 13346).